Here is a 272-residue protein sequence, read N- to C-terminus: 3-methyl-2-oxobutanoate hydroxymethyltransferase (272 aa).

Mg(2+) contacts are provided by Asp-52 and Asp-91. 3-methyl-2-oxobutanoate is bound by residues 52–53, Asp-91, and Lys-121; that span reads DS. Glu-123 contributes to the Mg(2+) binding site. Glu-190 functions as the Proton acceptor in the catalytic mechanism.

It belongs to the PanB family. In terms of assembly, homodecamer; pentamer of dimers. It depends on Mg(2+) as a cofactor.

The protein localises to the cytoplasm. It catalyses the reaction 3-methyl-2-oxobutanoate + (6R)-5,10-methylene-5,6,7,8-tetrahydrofolate + H2O = 2-dehydropantoate + (6S)-5,6,7,8-tetrahydrofolate. Its pathway is cofactor biosynthesis; (R)-pantothenate biosynthesis; (R)-pantoate from 3-methyl-2-oxobutanoate: step 1/2. In terms of biological role, catalyzes the reversible reaction in which hydroxymethyl group from 5,10-methylenetetrahydrofolate is transferred onto alpha-ketoisovalerate to form ketopantoate. This is 3-methyl-2-oxobutanoate hydroxymethyltransferase from Christiangramia forsetii (strain DSM 17595 / CGMCC 1.15422 / KT0803) (Gramella forsetii).